We begin with the raw amino-acid sequence, 86 residues long: Chymotrypsin inhibitor (86 aa).

Residues 1 to 22 (MKLLFAIVALLALAFLCADISA) form the signal peptide.

Belongs to the protease inhibitor I13 (potato type I serine protease inhibitor) family. Monomer. Expressed in the body wall, coelomocytes and at a lower level in intestine.

Its subcellular location is the secreted. Functionally, inhibits L.terrestris digestive chymotrypsin LT_CH 1 and bovine alpha-chymotrypsin. This is Chymotrypsin inhibitor from Lumbricus terrestris (Common earthworm).